The sequence spans 493 residues: MSIYQSIQDFISLALQNGTIEPLDELYHRNQLLHFLGLNDWAEVDKEVHETNSLILMDQLLAIANENNVIAKGQDEFYEAALMNFMTPRPSKINHDFWEKYQASPDDATQYFYELAQQVNQVKTRDIARNIAFSHLTKYGKLEITINLSKPEKDPKAIAAAKLVKASSYPACQLCLENEGFYGLGNKPARSNHRIIQVSINGEDWGFQYSPYAYFNEHSILLNAKHQPMEINKRAFDNLLGFLDKFPNYMIGSNADLPIVGGSILTHDHYQAGRHDFPMAKAELRETIELAHFPEVSCGIVNWPMSVLRLASENQVELSKAADDFLKKWQVYSDESLQIKAKSTDGTPHHTITPIARIRDGKYELDLVLRDNNTNEKYPDGIFHPHPALHHIKKENIGLIEVMGLAILPARLGTELLEVEKYLLNQDNQMDEIHKAWAEQLKNEEHFTRETVHATVQGAVGEVFEEVLKDAGVFKDTQEGHEGFRKFIDFVNQ.

It belongs to the galactose-1-phosphate uridylyltransferase type 2 family.

The protein resides in the cytoplasm. It carries out the reaction alpha-D-galactose 1-phosphate + UDP-alpha-D-glucose = alpha-D-glucose 1-phosphate + UDP-alpha-D-galactose. It functions in the pathway carbohydrate metabolism; galactose metabolism. The sequence is that of Galactose-1-phosphate uridylyltransferase from Lactococcus lactis subsp. cremoris (strain MG1363).